The sequence spans 511 residues: Maturase K (511 aa).

It belongs to the intron maturase 2 family. MatK subfamily.

It localises to the plastid. The protein resides in the chloroplast. Usually encoded in the trnK tRNA gene intron. Probably assists in splicing its own and other chloroplast group II introns. The sequence is that of Maturase K from Hordeum jubatum (Foxtail barley).